Reading from the N-terminus, the 139-residue chain is Hydrogenase maturation factor HypA (139 aa).

H2 is a binding site for Ni(2+). Zn(2+) contacts are provided by C73, C76, C110, and C113.

This sequence belongs to the HypA/HybF family.

In terms of biological role, involved in the maturation of [NiFe] hydrogenases. Required for nickel insertion into the metal center of the hydrogenase. This Thermococcus onnurineus (strain NA1) protein is Hydrogenase maturation factor HypA.